A 578-amino-acid chain; its full sequence is Leucine-rich repeat-containing protein 15 (578 aa).

Positions 1–21 are cleaved as a signal peptide; sequence MPLKHYLLLLVGCQAWALGLA. The LRRNT domain maps to 22–53; that stretch reads YYGCPSECTCSRASQVECTGARIVAMPTPLPW. Residues 22-535 are Extracellular-facing; that stretch reads YYGCPSECTC…TWGMTEAQSG (514 aa). 15 LRR repeats span residues 54-75, 78-99, 102-123, 126-147, 150-171, 174-195, 198-219, 222-243, 246-267, 270-291, 294-315, 318-339, 342-363, 366-387, and 390-411; these read NAMSLQVVNTHITELPENLFLN, ALIALKMEKNELSTIMPGAFRN, SLRYLSLANNKLRMLPIRVFQD, NLESLLLSNNQLVQIQPAQFSQ, NLRELQLHGNNLESIPEEAFDH, GLTKLNLGRNSFTHLSPRLFQH, NLQVLRLHENRLSDIPMGTFDA, NLQELALQENQIGTLSPGLFHN, NLQRLYLSNNHISQLPPGIFMQ, QLNKLTLFGNSLRELSPGVFGP, NLRELWLYNNHITSLADNTFSH, QLQVLILSHNQLTYISPGAFNG, NLRELSLHTNALQDLDSNVFRS, NLQNISLQSNRLRQLPGSIFAN, and GLTTIQLQNNNLENLPLGIFDH. An N-linked (GlcNAc...) asparagine glycan is attached at Asn-75. A glycan (N-linked (GlcNAc...) asparagine) is linked at Asn-369. The LRRCT domain maps to 423–473; it reads NPWRCDSDILPLHNWLLLNRARLGTDTLPVCSSPANVRGQSLVIININFPG. A disordered region spans residues 476-500; sequence VQGPETPEVPSYPDTPSYPDTTSVS. Residues 536–556 form a helical membrane-spanning segment; that stretch reads LAIAAIVIGIIALACSLAACI. The Cytoplasmic segment spans residues 557-578; the sequence is CCCCCKKRSQAVLMQMKAPNEC.

It is found in the cell membrane. This is Leucine-rich repeat-containing protein 15 (Lrrc15) from Rattus norvegicus (Rat).